The primary structure comprises 123 residues: Small ribosomal subunit protein uS13c (123 aa).

The segment at 89-123 (RGKRHRNNLPVRGQRTRTNARSRRGSKKTVTGKKK) is disordered. Residues 102–123 (QRTRTNARSRRGSKKTVTGKKK) are compositionally biased toward basic residues.

It belongs to the universal ribosomal protein uS13 family. Part of the 30S ribosomal subunit.

It localises to the plastid. Its subcellular location is the chloroplast. Located at the top of the head of the 30S subunit, it contacts several helices of the 16S rRNA. The protein is Small ribosomal subunit protein uS13c of Phaeodactylum tricornutum (strain CCAP 1055/1).